A 265-amino-acid chain; its full sequence is Ubiquinone biosynthesis protein COQ4 homolog, mitochondrial (265 aa).

A mitochondrion-targeting transit peptide spans 1-30 (MATLLRPVLRRLCGLPGLQRPAAEMPLRAR). The residue at position 108 (Ser-108) is a Phosphoserine. Residues His-163, Asp-164, His-167, and Glu-179 each coordinate Zn(2+).

This sequence belongs to the COQ4 family. Component of a multi-subunit COQ enzyme complex, composed of at least COQ3, COQ4, COQ5, COQ6, COQ7 and COQ9. Requires Zn(2+) as cofactor. As to expression, expressed ubiquitously, but at high levels in liver, lung and pancreas.

The protein resides in the mitochondrion inner membrane. It catalyses the reaction 4-hydroxy-3-methoxy-5-(all-trans-decaprenyl)benzoate + H(+) = 2-methoxy-6-(all-trans-decaprenyl)phenol + CO2. It functions in the pathway cofactor biosynthesis; ubiquinone biosynthesis. Its function is as follows. Lyase that catalyzes the C1-decarboxylation of 4-hydroxy-3-methoxy-5-(all-trans-decaprenyl)benzoic acid into 2-methoxy-6-(all-trans-decaprenyl)phenol during ubiquinone biosynthesis. This Homo sapiens (Human) protein is Ubiquinone biosynthesis protein COQ4 homolog, mitochondrial.